The primary structure comprises 469 residues: ATP synthase subunit beta (469 aa).

An ATP-binding site is contributed by 157-164 (GGAGVGKT).

The protein belongs to the ATPase alpha/beta chains family. F-type ATPases have 2 components, CF(1) - the catalytic core - and CF(0) - the membrane proton channel. CF(1) has five subunits: alpha(3), beta(3), gamma(1), delta(1), epsilon(1). CF(0) has three main subunits: a(1), b(2) and c(9-12). The alpha and beta chains form an alternating ring which encloses part of the gamma chain. CF(1) is attached to CF(0) by a central stalk formed by the gamma and epsilon chains, while a peripheral stalk is formed by the delta and b chains.

It is found in the cell membrane. It carries out the reaction ATP + H2O + 4 H(+)(in) = ADP + phosphate + 5 H(+)(out). Produces ATP from ADP in the presence of a proton gradient across the membrane. The catalytic sites are hosted primarily by the beta subunits. The chain is ATP synthase subunit beta from Brevibacillus brevis (strain 47 / JCM 6285 / NBRC 100599).